The chain runs to 352 residues: Phosphatidylglycerol--prolipoprotein diacylglyceryl transferase (352 aa).

The next 4 membrane-spanning stretches (helical) occupy residues W20–A40, F55–Y75, E97–A117, and V122–G142. A 1,2-diacyl-sn-glycero-3-phospho-(1'-sn-glycerol) is bound at residue R143. Helical transmembrane passes span S248–W268, G275–F295, and W314–A334.

It belongs to the Lgt family.

Its subcellular location is the cell inner membrane. It catalyses the reaction L-cysteinyl-[prolipoprotein] + a 1,2-diacyl-sn-glycero-3-phospho-(1'-sn-glycerol) = an S-1,2-diacyl-sn-glyceryl-L-cysteinyl-[prolipoprotein] + sn-glycerol 1-phosphate + H(+). The protein operates within protein modification; lipoprotein biosynthesis (diacylglyceryl transfer). Functionally, catalyzes the transfer of the diacylglyceryl group from phosphatidylglycerol to the sulfhydryl group of the N-terminal cysteine of a prolipoprotein, the first step in the formation of mature lipoproteins. This chain is Phosphatidylglycerol--prolipoprotein diacylglyceryl transferase, found in Bdellovibrio bacteriovorus (strain ATCC 15356 / DSM 50701 / NCIMB 9529 / HD100).